We begin with the raw amino-acid sequence, 74 residues long: Conotoxin VnMEKL-0222 (74 aa).

The first 19 residues, 1-19 (MEKLTILLLVAAVLMSTQA), serve as a signal peptide directing secretion. Residues 20-46 (LIQEKRPKEKIKFLSKRKSIPESWWEG) constitute a propeptide that is removed on maturation. Cystine bridges form between Cys-48-Cys-62, Cys-55-Cys-66, and Cys-61-Cys-71.

Belongs to the conotoxin O2 superfamily. As to expression, expressed by the venom duct.

Its subcellular location is the secreted. The chain is Conotoxin VnMEKL-0222 from Conus ventricosus (Mediterranean cone).